A 202-amino-acid chain; its full sequence is Large ribosomal subunit protein bL25 (202 aa).

The protein belongs to the bacterial ribosomal protein bL25 family. CTC subfamily. In terms of assembly, part of the 50S ribosomal subunit; part of the 5S rRNA/L5/L18/L25 subcomplex. Contacts the 5S rRNA. Binds to the 5S rRNA independently of L5 and L18.

Its function is as follows. This is one of the proteins that binds to the 5S RNA in the ribosome where it forms part of the central protuberance. This chain is Large ribosomal subunit protein bL25, found in Clostridium perfringens (strain ATCC 13124 / DSM 756 / JCM 1290 / NCIMB 6125 / NCTC 8237 / Type A).